The chain runs to 202 residues: uncharacterized protein (202 aa).

This is an uncharacterized protein from Homo sapiens (Human).